A 1310-amino-acid polypeptide reads, in one-letter code: PAN2-PAN3 deadenylation complex catalytic subunit pan2 (1310 aa).

4 WD repeats span residues 22-61 (YHAG…RFTA), 67-105 (ETDG…SIRH), 106-144 (ESMQ…GEVV), and 145-184 (KELP…IKKQ). A linker region spans residues 318–463 (QFTEIGIPPR…NNDHWSLRPE (146 aa)). The USP domain occupies 463-850 (EAPPEYRICE…MPVVVMFQVK (388 aa)). Residues histidine 525, cysteine 530, cysteine 535, cysteine 538, cysteine 645, cysteine 648, cysteine 700, and cysteine 703 each coordinate Zn(2+). Residues 897-1070 (IAIDTEFIRL…EDAQTALKLY (174 aa)) form the Exonuclease domain. A divalent metal cation-binding residues include aspartate 900, glutamate 902, aspartate 1009, and aspartate 1062. Residues 1121–1169 (TPPVPAPGTTEGSFEISNSSTATTGGSALSATGGMGSASASSSMPSTPV) are disordered. Residues 1139-1168 (SSTATTGGSALSATGGMGSASASSSMPSTP) are compositionally biased toward low complexity.

It belongs to the peptidase C19 family. PAN2 subfamily. Forms a heterotrimer with an asymmetric homodimer of the regulatory subunit par-2/pan3 to form the poly(A)-nuclease (PAN) deadenylation complex. A divalent metal cation is required as a cofactor.

It is found in the cytoplasm. The enzyme catalyses Exonucleolytic cleavage of poly(A) to 5'-AMP.. With respect to regulation, positively regulated by the regulatory subunit par-2/pan3. In terms of biological role, catalytic subunit of the poly(A)-nuclease (PAN) deadenylation complex, one of two cytoplasmic mRNA deadenylases involved in mRNA turnover. PAN specifically shortens poly(A) tails of RNA and the activity is stimulated by poly(A)-binding protein pabp-1. PAN deadenylation is followed by rapid degradation of the shortened mRNA tails by the CCR4-NOT complex. Deadenylated mRNAs are then degraded by two alternative mechanisms, namely exosome-mediated 3'-5' exonucleolytic degradation, or deadenylation-dependent mRNA decaping and subsequent 5'-3' exonucleolytic degradation by rgb-30/xrn1. May also be involved in post-transcriptional maturation of mRNA poly(A) tails. In Neurospora crassa (strain ATCC 24698 / 74-OR23-1A / CBS 708.71 / DSM 1257 / FGSC 987), this protein is PAN2-PAN3 deadenylation complex catalytic subunit pan2 (par-1).